A 225-amino-acid chain; its full sequence is Deoxyribose-phosphate aldolase (225 aa).

Asp96 serves as the catalytic Proton donor/acceptor. Lys157 (schiff-base intermediate with acetaldehyde) is an active-site residue. Lys185 serves as the catalytic Proton donor/acceptor.

The protein belongs to the DeoC/FbaB aldolase family. DeoC type 1 subfamily.

Its subcellular location is the cytoplasm. The catalysed reaction is 2-deoxy-D-ribose 5-phosphate = D-glyceraldehyde 3-phosphate + acetaldehyde. It functions in the pathway carbohydrate degradation; 2-deoxy-D-ribose 1-phosphate degradation; D-glyceraldehyde 3-phosphate and acetaldehyde from 2-deoxy-alpha-D-ribose 1-phosphate: step 2/2. Functionally, catalyzes a reversible aldol reaction between acetaldehyde and D-glyceraldehyde 3-phosphate to generate 2-deoxy-D-ribose 5-phosphate. This chain is Deoxyribose-phosphate aldolase, found in Microcystis aeruginosa (strain NIES-843 / IAM M-2473).